The following is a 98-amino-acid chain: Ferredoxin-like protein (98 aa).

The protein to ferredoxins from P.putida and C.tartarivorum, ferredoxin I from A.vinelandii, ferredoxin II from D.desulfuricans.

Could be a 3Fe-4S cluster-containing protein. This chain is Ferredoxin-like protein (fixX), found in Rhizobium leguminosarum.